Reading from the N-terminus, the 352-residue chain is MRKKIKVLIVEDSLVVRELLKHIIGSDERFEVMAAVTSAEDCLEMLETQQPDVISLDIRLPGMNGLDATLKIMSRRPTPIVVVAAQVDDNELNIAMNALRAGALSVVEKPVGVTNAGYDTMAAKICTQLAIMSQVQVVRQGINRGLNFGSDDTPARVSQGRPGTYSMVGIVASTGGPQALVQLLGGLGADFPLPILLVQHITSSFLEGFVTWLSGTTPFEARIAQDGEKPVAGKVYVAPVDHHLGLVNDQLVILDLPAVCNQKPSGTVLFGSMARDIGKHGIGVVLTGMGADGSEGLRQMADKGAYTIVEDASTCVVNGMPAAAAKLGAARETLPLPAIAARLRDLALGGEK.

Residues 6-124 enclose the Response regulatory domain; the sequence is KVLIVEDSLV…NAGYDTMAAK (119 aa). Aspartate 57 carries the post-translational modification 4-aspartylphosphate. Residues 162-343 enclose the CheB-type methylesterase domain; it reads PGTYSMVGIV…LPLPAIAARL (182 aa). Active-site residues include serine 173, histidine 200, and aspartate 292.

The protein belongs to the CheB family. Post-translationally, phosphorylated by CheA. Phosphorylation of the N-terminal regulatory domain activates the methylesterase activity.

It localises to the cytoplasm. The enzyme catalyses [protein]-L-glutamate 5-O-methyl ester + H2O = L-glutamyl-[protein] + methanol + H(+). It carries out the reaction L-glutaminyl-[protein] + H2O = L-glutamyl-[protein] + NH4(+). Its function is as follows. Involved in chemotaxis. Part of a chemotaxis signal transduction system that modulates chemotaxis in response to various stimuli. Catalyzes the demethylation of specific methylglutamate residues introduced into the chemoreceptors (methyl-accepting chemotaxis proteins or MCP) by CheR. Also mediates the irreversible deamidation of specific glutamine residues to glutamic acid. This is Protein-glutamate methylesterase/protein-glutamine glutaminase 2 from Paramagnetospirillum magneticum (strain ATCC 700264 / AMB-1) (Magnetospirillum magneticum).